The primary structure comprises 335 residues: UPF0353 protein NFA_34780 (335 aa).

Transmembrane regions (helical) follow at residues 8 to 28 and 61 to 81; these read ALIWLGFLAVVALIALGYVLV and IALMLVGLVFLTIAAAGPTSV. The region spanning 90–295 is the VWFA domain; it reads TVVLVMDVSL…EELTAVYDTL (206 aa). Residues 310–330 form a helical membrane-spanning segment; sequence RPWLLLGMLVVAAGIVTGLLY.

The protein belongs to the UPF0353 family.

It localises to the cell membrane. The chain is UPF0353 protein NFA_34780 from Nocardia farcinica (strain IFM 10152).